We begin with the raw amino-acid sequence, 166 residues long: UPF0304 protein VFMJ11_1926 (166 aa).

Belongs to the UPF0304 family.

In Aliivibrio fischeri (strain MJ11) (Vibrio fischeri), this protein is UPF0304 protein VFMJ11_1926.